Consider the following 693-residue polypeptide: Glycine--tRNA ligase beta subunit (693 aa).

Residues glutamine 65–glycine 74 show a composition bias toward basic and acidic residues. The tract at residues glutamine 65 to serine 84 is disordered.

The protein belongs to the class-II aminoacyl-tRNA synthetase family. As to quaternary structure, tetramer of two alpha and two beta subunits.

The protein localises to the cytoplasm. The enzyme catalyses tRNA(Gly) + glycine + ATP = glycyl-tRNA(Gly) + AMP + diphosphate. The chain is Glycine--tRNA ligase beta subunit from Marinobacter nauticus (strain ATCC 700491 / DSM 11845 / VT8) (Marinobacter aquaeolei).